Consider the following 344-residue polypeptide: Hypoxia-inducible factor 1-alpha inhibitor (344 aa).

Alanine 2 bears the N-acetylalanine mark. The 171-residue stretch at 133-303 (GRVYLQQTLN…PKRIEYPLKA (171 aa)) folds into the JmjC domain. Tyrosine 136 is a 2-oxoglutarate binding site. Residues aspartate 143 and 173 to 174 (LT) contribute to the substrate site. Residue threonine 187 coordinates 2-oxoglutarate. Fe cation is bound by residues histidine 190 and aspartate 192. Residue 192–194 (DEQ) participates in substrate binding. Residues asparagine 196 and lysine 205 each coordinate 2-oxoglutarate. 229-230 (RQ) is a substrate binding site. A Fe cation-binding site is contributed by histidine 270. Asparagine 285 contacts 2-oxoglutarate. Substrate-binding residues include alanine 291 and asparagine 312.

Homodimer; homodimerization is essential for catalytic activity. Fe(2+) serves as cofactor.

It is found in the nucleus. It localises to the cytoplasm. Its subcellular location is the perinuclear region. The catalysed reaction is L-asparaginyl-[hypoxia-inducible factor alpha subunit] + 2-oxoglutarate + O2 = (3S)-3-hydroxy-L-asparaginyl-[hypoxia-inducible factor alpha subunit] + succinate + CO2. It carries out the reaction L-histidyl-[ankyrin-repeat domain protein] + 2-oxoglutarate + O2 = (3S)-3-hydroxy-L-histidyl-[ankyrin-repeat domain protein] + succinate + CO2. It catalyses the reaction L-asparaginyl-[ankyrin-repeat domain protein] + 2-oxoglutarate + O2 = (3S)-3-hydroxy-L-asparaginyl-[ankyrin-repeat domain protein] + succinate + CO2. The enzyme catalyses L-aspartyl-[ankyrin-repeat domain protein] + 2-oxoglutarate + O2 = (3S)-3-hydroxy-L-aspartyl-[ankyrin-repeat domain protein] + succinate + CO2. Its function is as follows. Hydroxylates a specific Asn residue in the C-terminal transactivation domain (CAD) of HIF-1 alpha. The hydroxylation prevents interaction of HIF-1 with transcriptional coactivators. Also hydroxylates specific Asn, Asp and His residues within ankyrin repeat domain-containing proteins. This is Hypoxia-inducible factor 1-alpha inhibitor (hif1an) from Danio rerio (Zebrafish).